The sequence spans 429 residues: Phosphoribosylamine--glycine ligase (429 aa).

Residues 109 to 316 (KDFLARHNIP…LVELCLAACE (208 aa)) enclose the ATP-grasp domain. 135–196 (LREKGAPIVI…EEFLDGEEAS (62 aa)) is an ATP binding site. Residues 212-236 (SQDHKRVGDKDTGPNTGGMGAYSPA) are disordered. A compositionally biased stretch (basic and acidic residues) spans 213–223 (QDHKRVGDKDT). Mg(2+)-binding residues include Glu-286 and Asn-288.

This sequence belongs to the GARS family. In terms of assembly, monomer. Mg(2+) serves as cofactor. Mn(2+) is required as a cofactor.

The catalysed reaction is 5-phospho-beta-D-ribosylamine + glycine + ATP = N(1)-(5-phospho-beta-D-ribosyl)glycinamide + ADP + phosphate + H(+). Its pathway is purine metabolism; IMP biosynthesis via de novo pathway; N(1)-(5-phospho-D-ribosyl)glycinamide from 5-phospho-alpha-D-ribose 1-diphosphate: step 2/2. The protein is Phosphoribosylamine--glycine ligase of Escherichia coli O6:H1 (strain CFT073 / ATCC 700928 / UPEC).